An 879-amino-acid chain; its full sequence is Phosphoenolpyruvate carboxylase (879 aa).

Active-site residues include His-141 and Lys-546.

Belongs to the PEPCase type 1 family. Mg(2+) serves as cofactor.

The enzyme catalyses oxaloacetate + phosphate = phosphoenolpyruvate + hydrogencarbonate. Its function is as follows. Forms oxaloacetate, a four-carbon dicarboxylic acid source for the tricarboxylic acid cycle. The polypeptide is Phosphoenolpyruvate carboxylase (Stutzerimonas stutzeri (strain A1501) (Pseudomonas stutzeri)).